We begin with the raw amino-acid sequence, 211 residues long: High mobility group protein B1-like 1 (211 aa).

Residues lysine 3, lysine 7, lysine 8, lysine 12, lysine 28, lysine 29, and lysine 30 each carry the N6-acetyllysine modification. The HMG box 1 DNA-binding region spans 9–79; it reads PRGKMSSYAF…HYERQMKTYI (71 aa). The tract at residues 71-96 is disordered; sequence YERQMKTYIPPKGETKKKFKDPNAPK. The segment covering 83 to 94 has biased composition (basic and acidic residues); the sequence is GETKKKFKDPNA. A DNA-binding region (HMG box 2) is located at residues 95–163; that stretch reads PKRPPSAFFL…KYEKDIAAYQ (69 aa). Residues lysine 127, lysine 128, lysine 172, lysine 173, lysine 177, lysine 180, lysine 182, lysine 183, lysine 184, and lysine 185 each carry the N6-acetyllysine modification. Residues 161 to 211 form a disordered region; it reads AYQAKGKPEAAKKGVVKAEKSKKKKEEEEDEEDEEDEEEEDEEDEEDDDDE. Residues 166-179 show a composition bias toward basic and acidic residues; that stretch reads GKPEAAKKGVVKAE. Over residues 187–211 the composition is skewed to acidic residues; sequence EEEDEEDEEDEEEEDEEDEEDDDDE.

The protein belongs to the HMGB family.

It localises to the nucleus. The protein localises to the chromosome. Functionally, binds preferentially single-stranded DNA and unwinds double-stranded DNA. This is High mobility group protein B1-like 1 (HMGB1P1) from Homo sapiens (Human).